Consider the following 376-residue polypeptide: Chorismate synthase (376 aa).

2 residues coordinate NADP(+): R39 and R45. FMN contacts are provided by residues 115 to 117 (RSS), G276, 291 to 295 (KPIPT), and R317.

Belongs to the chorismate synthase family. Homotetramer. FMNH2 serves as cofactor.

It carries out the reaction 5-O-(1-carboxyvinyl)-3-phosphoshikimate = chorismate + phosphate. The protein operates within metabolic intermediate biosynthesis; chorismate biosynthesis; chorismate from D-erythrose 4-phosphate and phosphoenolpyruvate: step 7/7. Catalyzes the anti-1,4-elimination of the C-3 phosphate and the C-6 proR hydrogen from 5-enolpyruvylshikimate-3-phosphate (EPSP) to yield chorismate, which is the branch point compound that serves as the starting substrate for the three terminal pathways of aromatic amino acid biosynthesis. This reaction introduces a second double bond into the aromatic ring system. In Thermotoga maritima (strain ATCC 43589 / DSM 3109 / JCM 10099 / NBRC 100826 / MSB8), this protein is Chorismate synthase.